Here is a 185-residue protein sequence, read N- to C-terminus: UPF0149 protein XF_2010 (185 aa).

This sequence belongs to the UPF0149 family.

This chain is UPF0149 protein XF_2010, found in Xylella fastidiosa (strain 9a5c).